The sequence spans 690 residues: Eukaryotic translation initiation factor 3 subunit B (690 aa).

Over residues 1–11 (MAKKKSEEHSG) the composition is skewed to basic and acidic residues. Residues 1–36 (MAKKKSEEHSGADANDSDYQEEPNFEDPPGFVDNIS) form a disordered region. Acidic residues predominate over residues 15–25 (NDSDYQEEPNF). The RRM domain occupies 57-141 (SVVVVDNIPK…HTFAVNLFTD (85 aa)). WD repeat units follow at residues 207–246 (TRERFTDTFVKWSPLGTYVVTFHKPGVAIWGGSSFQKIQK), 293–331 (DGMSVLSMFRWSHDDKFVARMGENSIHIYETPSFYLLDL), 334–369 (IKIPGIRGFSWSPTDNVIAYWVEEQNQIPARVTLME), 442–484 (EIRE…KPSL), and 530–575 (PDHF…IKRT). A coiled-coil region spans residues 595–645 (EEKQKEIKKNLKKYYAAFEQKDRLRLTRASKELLEKRSQLRETFMEYRNKR).

Belongs to the eIF-3 subunit B family. In terms of assembly, component of the eukaryotic translation initiation factor 3 (eIF-3) complex. The eIF-3 complex interacts with pix. Interacts with mxt.

The protein localises to the cytoplasm. In terms of biological role, RNA-binding component of the eukaryotic translation initiation factor 3 (eIF-3) complex, which is involved in protein synthesis of a specialized repertoire of mRNAs and, together with other initiation factors, stimulates binding of mRNA and methionyl-tRNAi to the 40S ribosome. The eIF-3 complex specifically targets and initiates translation of a subset of mRNAs involved in cell proliferation. The polypeptide is Eukaryotic translation initiation factor 3 subunit B (Drosophila simulans (Fruit fly)).